The sequence spans 224 residues: Coiled-coil domain-containing protein 43 (224 aa).

Residue Lys95 forms a Glycyl lysine isopeptide (Lys-Gly) (interchain with G-Cter in SUMO1) linkage. 2 coiled-coil regions span residues 121–145 (SEEE…EDEA) and 177–218 (RKLE…KRTQ). Acidic residues predominate over residues 138–149 (VTDEEDEADEKD). 2 disordered regions span residues 138 to 157 (VTDE…TTMN) and 176 to 224 (ARKL…ERKR). The residue at position 139 (Thr139) is a Phosphothreonine. Over residues 176–211 (ARKLERDSLRDESQRKKEQDKLQRERDKLAKQERKE) the composition is skewed to basic and acidic residues. Over residues 212–224 (KEKKRTQRGERKR) the composition is skewed to basic residues.

The protein belongs to the CCDC43 family.

This is Coiled-coil domain-containing protein 43 (CCDC43) from Homo sapiens (Human).